The primary structure comprises 344 residues: uncharacterized protein (344 aa).

A disordered region spans residues 95–344; that stretch reads TINPEDANED…TPAKKNSKGR (250 aa). A compositionally biased stretch (basic and acidic residues) spans 103-123; that stretch reads EDAKVKNSLKLEKEEGSDEKS. Residues 135-155 show a composition bias toward acidic residues; the sequence is SDDESDNSNDSEESEAEDSDQ. Low complexity predominate over residues 191 to 200; that stretch reads SAKNAKASKP. Residues 244–259 show a composition bias toward acidic residues; the sequence is SEDEDSGSDNSEEESE. The span at 265–276 shows a compositional bias: basic residues; that stretch reads ASSKKPPSKSSK. The span at 281–314 shows a compositional bias: acidic residues; the sequence is EDEDEDSGQSESEHSEEESNSDEDSGQSEEESEE. Over residues 331–344 the composition is skewed to basic residues; that stretch reads TAKKTPAKKNSKGR.

This is an uncharacterized protein from Acanthamoeba polyphaga (Amoeba).